Reading from the N-terminus, the 278-residue chain is Dermonecrotic toxin LspiSicTox-betaIE2iii (278 aa).

The active site involves His-5. Positions 25 and 27 each coordinate Mg(2+). The active-site Nucleophile is the His-41. 2 cysteine pairs are disulfide-bonded: Cys-45/Cys-51 and Cys-47/Cys-190. Mg(2+) is bound at residue Asp-85.

This sequence belongs to the arthropod phospholipase D family. Class II subfamily. It depends on Mg(2+) as a cofactor. As to expression, expressed by the venom gland.

It is found in the secreted. It catalyses the reaction an N-(acyl)-sphingosylphosphocholine = an N-(acyl)-sphingosyl-1,3-cyclic phosphate + choline. The enzyme catalyses an N-(acyl)-sphingosylphosphoethanolamine = an N-(acyl)-sphingosyl-1,3-cyclic phosphate + ethanolamine. The catalysed reaction is a 1-acyl-sn-glycero-3-phosphocholine = a 1-acyl-sn-glycero-2,3-cyclic phosphate + choline. It carries out the reaction a 1-acyl-sn-glycero-3-phosphoethanolamine = a 1-acyl-sn-glycero-2,3-cyclic phosphate + ethanolamine. Functionally, dermonecrotic toxins cleave the phosphodiester linkage between the phosphate and headgroup of certain phospholipids (sphingolipid and lysolipid substrates), forming an alcohol (often choline) and a cyclic phosphate. This toxin acts on sphingomyelin (SM). It may also act on ceramide phosphoethanolamine (CPE), lysophosphatidylcholine (LPC) and lysophosphatidylethanolamine (LPE), but not on lysophosphatidylserine (LPS), and lysophosphatidylglycerol (LPG). It acts by transphosphatidylation, releasing exclusively cyclic phosphate products as second products. Induces dermonecrosis, hemolysis, increased vascular permeability, edema, inflammatory response, and platelet aggregation. This Loxosceles spinulosa (Recluse spider) protein is Dermonecrotic toxin LspiSicTox-betaIE2iii.